The sequence spans 525 residues: MRVFCVGLLLFSVTWAAPTFQPQTEKTKQSCVEEQRQEEKNKDNIGFHHLGKRINQELSSKENIVQERKKDLSLSEASENKGSSKSQNYFTNRQRLNKEYSISNKENTHNGLRMSIYPKSTGNKGFEDGDDAISKLHDQEEYGAALIRNNMQHIMGPVTAIKLLGEENKENTPRNVLNIIPASMNYAKAHSKDKKKPQRDSQAQKSPVKSKSTHRIQHNIDYLKHLSKVKKIPSDFEGSGYTDLQERGDNDISPFSGDGQPFKDIPGKGEATGPDLEGKDIQTGFAGPSEAESTHLDTKKPGYNEIPEREENGGNTIGTRDETAKEADAVDVSLVEGSNDIMGSTNFKELPGREGNRVDAGSQNAHQGKVEFHYPPAPSKEKRKEGSSDAAESTNYNEIPKNGKGSTRKGVDHSNRNQATLNEKQRFPSKGKSQGLPIPSRGLDNEIKNEMDSFNGPSHENIITHGRKYHYVPHRQNNSTRNKGMPQGKGSWGRQPHSNRRFSSRRRDDSSESSDSGSSSESDGD.

A signal peptide spans 1 to 17 (MRVFCVGLLLFSVTWAA). 3 disordered regions span residues 24–95 (TEKT…NRQR), 187–216 (AKAH…THRI), and 237–525 (EGSG…SDGD). Basic and acidic residues-rich tracts occupy residues 25–46 (EKTK…DNIG) and 64–73 (IVQERKKDLS). 2 stretches are compositionally biased toward polar residues: residues 75–95 (SEAS…NRQR) and 200–210 (DSQAQKSPVKS). A dentonin region spans residues 242–264 (TDLQERGDNDISPFSGDGQPFKD). A Cell attachment site motif is present at residues 247–249 (RGD). O-linked (Xyl...) (chondroitin sulfate) serine glycosylation is present at Ser-256. 2 stretches are compositionally biased toward basic and acidic residues: residues 292–312 (ESTH…REEN) and 319–328 (TRDETAKEAD). N-linked (GlcNAc...) asparagine glycans are attached at residues Asn-477 and Asn-478. The tract at residues 507-525 (RDDSSESSDSGSSSESDGD) is ASARM motif; interaction with PHEX. The span at 513–525 (SSDSGSSSESDGD) shows a compositional bias: low complexity.

The protein belongs to the PF07175/osteoregulin family. In terms of assembly, interacts (via the ASARM motif) with PHEX; the interaction is zinc-dependent. In terms of processing, phosphorylated on serine residues in the ASARM motif (in vitro) by FAM20C; the phosphorylation is important for the inhibition of bone mineralization. Post-translationally, cleaved by CTSB/cathepsin B; the cleavage is blocked by metalloprotease PHEX. Detected in urine (at protein level). Expressed by osteoblasts. Expressed by stem cells in dental pulp. Expressed by mesenchymal cells in dental papilla and dental pulp. Expressed in teeth, specifically in decidious dentin. Expressed in ondotoblasts. Expressed in salivary glands. Secreted from oncogenic hypophosphatemic tumors.

The protein localises to the secreted. It is found in the extracellular space. The protein resides in the extracellular matrix. Promotes renal phosphate excretion and inhibits intestinal phosphate absorption. Promotes bone mineralization by osteoblasts and cartilage mineralization by chondrocytes. Regulates the mineralization of the extracellular matrix of the craniofacial complex, such as teeth, bone and cartilage. Promotes dental pulp stem cell proliferation and differentiation. This is Matrix extracellular phosphoglycoprotein (MEPE) from Homo sapiens (Human).